Consider the following 362-residue polypeptide: tRNA N6-adenosine threonylcarbamoyltransferase (362 aa).

His-120 and His-124 together coordinate Fe cation. Substrate is bound by residues 142-146 (LASGG), Asp-175, Gly-188, and Asn-288. Asp-316 is a binding site for Fe cation. The segment covering 342-351 (RPRWPLDPDA) has biased composition (basic and acidic residues). The disordered stretch occupies residues 342–362 (RPRWPLDPDAPKAAGAGGVKA).

It belongs to the KAE1 / TsaD family. The cofactor is Fe(2+).

It localises to the cytoplasm. It carries out the reaction L-threonylcarbamoyladenylate + adenosine(37) in tRNA = N(6)-L-threonylcarbamoyladenosine(37) in tRNA + AMP + H(+). Functionally, required for the formation of a threonylcarbamoyl group on adenosine at position 37 (t(6)A37) in tRNAs that read codons beginning with adenine. Is involved in the transfer of the threonylcarbamoyl moiety of threonylcarbamoyl-AMP (TC-AMP) to the N6 group of A37, together with TsaE and TsaB. TsaD likely plays a direct catalytic role in this reaction. In Rhodospirillum rubrum (strain ATCC 11170 / ATH 1.1.1 / DSM 467 / LMG 4362 / NCIMB 8255 / S1), this protein is tRNA N6-adenosine threonylcarbamoyltransferase.